A 445-amino-acid polypeptide reads, in one-letter code: Coronin-A (445 aa).

WD repeat units lie at residues 77–117 (GHKS…LTDS), 127–167 (GHKR…NLTT), 170–209 (GHSD…IVNE), and 259–299 (DSAS…PYIH). Residues 410-444 (KNEKELREEYEKLKIRVAYLESEIVKKDAKIKELT) are a coiled coil.

Belongs to the WD repeat coronin family. Binds to F-actin.

It localises to the cell surface. Functionally, required for normal motility. Participates in cytokinesis. The protein is Coronin-A (corA) of Dictyostelium discoideum (Social amoeba).